A 300-amino-acid polypeptide reads, in one-letter code: Small ribosomal subunit protein uS2 (300 aa).

Positions 228–300 (RAGLSADKDA…PAAEAPSTEA (73 aa)) are disordered. The span at 258–300 (AAPAAEAAPAAEAAPAAEAAPAAEAQAAPAAEAPAAEAPSTEA) shows a compositional bias: low complexity.

It belongs to the universal ribosomal protein uS2 family.

The sequence is that of Small ribosomal subunit protein uS2 from Rhodococcus jostii (strain RHA1).